Here is a 219-residue protein sequence, read N- to C-terminus: Ribonuclease HII (219 aa).

In terms of domain architecture, RNase H type-2 spans 10-219 (HLEAGTDEAG…LLPEQTVLDL (210 aa)). A divalent metal cation-binding residues include Asp16, Glu17, and Asp108.

The protein belongs to the RNase HII family. The cofactor is Mn(2+). Requires Mg(2+) as cofactor.

It localises to the cytoplasm. The enzyme catalyses Endonucleolytic cleavage to 5'-phosphomonoester.. In terms of biological role, endonuclease that specifically degrades the RNA of RNA-DNA hybrids. The protein is Ribonuclease HII of Flavobacterium psychrophilum (strain ATCC 49511 / DSM 21280 / CIP 103535 / JIP02/86).